A 357-amino-acid polypeptide reads, in one-letter code: Ribosomal RNA large subunit methyltransferase M (357 aa).

S-adenosyl-L-methionine contacts are provided by residues Ser-183, 216–219 (APGG), Asp-235, Asp-255, and Asp-271. Catalysis depends on Lys-300, which acts as the Proton acceptor.

This sequence belongs to the class I-like SAM-binding methyltransferase superfamily. RNA methyltransferase RlmE family. RlmM subfamily. As to quaternary structure, monomer.

Its subcellular location is the cytoplasm. The catalysed reaction is cytidine(2498) in 23S rRNA + S-adenosyl-L-methionine = 2'-O-methylcytidine(2498) in 23S rRNA + S-adenosyl-L-homocysteine + H(+). In terms of biological role, catalyzes the 2'-O-methylation at nucleotide C2498 in 23S rRNA. The protein is Ribosomal RNA large subunit methyltransferase M of Pseudomonas fluorescens (strain ATCC BAA-477 / NRRL B-23932 / Pf-5).